The primary structure comprises 64 residues: Large ribosomal subunit protein uL29 (64 aa).

This sequence belongs to the universal ribosomal protein uL29 family.

This chain is Large ribosomal subunit protein uL29, found in Burkholderia ambifaria (strain MC40-6).